A 328-amino-acid polypeptide reads, in one-letter code: MAMTAQVKAELASTQVTKTCCRKAEVASMLRFAGGLHIVSGRIVVEAEFDTGAAARRLRTNIAEVYGHQSDVVMVQGNGIRKGSRYIVRVVKDGEALARQTGLLDQRGRPVRGLPPAVVSGGGCDAVAAWRGAFLAHGSLTEPGRSSALEVTCPGPEAALALVGVARRLGIHAKAREVRGVDRVVIRDGDAIGQLLTRLGAHESLMAWEERRMRREVRATANRLANFDDANLRRSARAAVAAGARVDRAMEILGEEVPDHLRMAGQLRLEHKQASLEELGQLHDPVLTKDAIAGRIRRLLAMADKRAEELGIPDTESSLTPDMLADEG.

The segment at residues serine 275–glutamate 308 is a DNA-binding region (H-T-H motif).

Belongs to the WhiA family.

In terms of biological role, involved in cell division and chromosome segregation. This Nocardioides sp. (strain ATCC BAA-499 / JS614) protein is Probable cell division protein WhiA.